A 365-amino-acid polypeptide reads, in one-letter code: MERGLHLGAAAASEDDLFLHKSLGASTAKRLEAAFRSTPPGMDLSLAPPPRERPASSSSSPLGCFEPADPEGAGLLLPPPGGGGGAGGGGGGGGGGGVSVPGLLVGSAGVGGDPNLSSLPAGAALCLKYGESAGRGSVAESSGGEQSPDDDSDGRCELVLRAGGADPRASPGAGGGGTKVVEGCSNAHLHGGAGLPPGGSTGSGGGGSGGGGGGGSSSKKSKEQKALRLNINARERRRMHDLNDALDELRAVIPYAHSPSVRKLSKIATLLLAKNYILMQAQALEEMRRLVAYLNQGQAISAASLPSSAAAAAAAAALHPALGAYEQAAGYPFSAGLPPAASCPEKCALFNSVSSSLCKQCTEKP.

3 disordered regions span residues 34–93 (AFRS…GGGG), 134–156 (GRGSVAESSGGEQSPDDDSDGRC), and 188–225 (HLHGGAGLPPGGSTGSGGGGSGGGGGGGSSSKKSKEQK). The segment covering 82-93 (GGGGAGGGGGGG) has biased composition (gly residues). A compositionally biased stretch (gly residues) spans 191–216 (GGAGLPPGGSTGSGGGGSGGGGGGGS). Residues 226 to 280 (ALRLNINARERRRMHDLNDALDELRAVIPYAHSPSVRKLSKIATLLLAKNYILMQ) form the bHLH domain.

In terms of assembly, heterodimer with other bHLH proteins, like TCF3/E47. Kidney, lung, brain and pancreas (insulinoma).

It localises to the nucleus. In terms of biological role, inhibits DNA binding of TCF3/E47 homodimers and TCF3 (E47)/NEUROD1 heterodimers and acts as a strong repressor of Neurod1 and Myod-responsive genes, probably by heterodimerization with class a basic helix-loop-helix factors. Despite the presence of an intact basic domain, does not bind to DNA. The polypeptide is Class E basic helix-loop-helix protein 22 (BHLHE22) (Mesocricetus auratus (Golden hamster)).